We begin with the raw amino-acid sequence, 361 residues long: Cysteine-rich with EGF-like domain protein 2-B (361 aa).

A signal peptide spans Met1–Ala24. The EGF-like 1 domain occupies Asp134 to Leu176. 3 cysteine pairs are disulfide-bonded: Cys138/Cys152, Cys146/Cys164, and Cys166/Cys175. An N-linked (GlcNAc...) asparagine glycan is attached at Asn188. FU repeat units follow at residues His191–Pro238 and Ser251–Leu298. Positions Asp288 to Val329 constitute an EGF-like 2; calcium-binding domain. 3 cysteine pairs are disulfide-bonded: Cys292-Cys306, Cys299-Cys315, and Cys317-Cys328. The interval Ile339 to Leu361 is disordered. Residues Thr346–Asn355 are compositionally biased toward polar residues.

Belongs to the CRELD family.

The protein localises to the secreted. It localises to the endoplasmic reticulum. Its function is as follows. Possible role in neuronal acetylcholine receptor transport. In Xenopus laevis (African clawed frog), this protein is Cysteine-rich with EGF-like domain protein 2-B (creld2-b).